The sequence spans 620 residues: 1-deoxy-D-xylulose-5-phosphate synthase (620 aa).

Residues histidine 80 and 121-123 contribute to the thiamine diphosphate site; that span reads GHS. Aspartate 152 contacts Mg(2+). Residues 153 to 154, asparagine 181, tyrosine 288, and glutamate 370 each bind thiamine diphosphate; that span reads GA. Mg(2+) is bound at residue asparagine 181.

This sequence belongs to the transketolase family. DXPS subfamily. As to quaternary structure, homodimer. Requires Mg(2+) as cofactor. Thiamine diphosphate serves as cofactor.

It catalyses the reaction D-glyceraldehyde 3-phosphate + pyruvate + H(+) = 1-deoxy-D-xylulose 5-phosphate + CO2. The protein operates within metabolic intermediate biosynthesis; 1-deoxy-D-xylulose 5-phosphate biosynthesis; 1-deoxy-D-xylulose 5-phosphate from D-glyceraldehyde 3-phosphate and pyruvate: step 1/1. Functionally, catalyzes the acyloin condensation reaction between C atoms 2 and 3 of pyruvate and glyceraldehyde 3-phosphate to yield 1-deoxy-D-xylulose-5-phosphate (DXP). This chain is 1-deoxy-D-xylulose-5-phosphate synthase, found in Pseudoalteromonas translucida (strain TAC 125).